Here is a 446-residue protein sequence, read N- to C-terminus: RUN domain-containing protein 3A (446 aa).

Residues 1–298 (METSFVQTTM…LQLQLEEAAA (298 aa)) form an interaction with RAP2A region. The RUN domain maps to 52-189 (DDSSEEFVNF…IDFSFCLKGE (138 aa)). The residue at position 215 (Thr215) is a Phosphothreonine. The interval 216–239 (DEEERHSAESSTSEDNSPEHPYLP) is disordered. Ser232 carries the phosphoserine modification. A coiled-coil region spans residues 267-322 (YLEELVRLRESQLKDLEAENRRLQLQLEEAAAQNQREKRELEGVILELQEQLTGLI). The segment covering 372–384 (PLSAEASLSSDSQ) has biased composition (polar residues). A disordered region spans residues 372–404 (PLSAEASLSSDSQRLGEGTRDEEPWGPIGKDPT). 2 positions are modified to phosphoserine: Ser416 and Ser419.

It belongs to the RUNDC3 family. As to quaternary structure, interacts with the GTP-bound form of RAP2A.

Its function is as follows. May act as an effector of RAP2A in neuronal cells. The sequence is that of RUN domain-containing protein 3A (RUNDC3A) from Pongo abelii (Sumatran orangutan).